The primary structure comprises 376 residues: Small RNA 2'-O-methyltransferase (376 aa).

S-adenosyl-L-methionine is bound by residues Thr49, Asp67, and Ser103. Glu121, Glu124, His125, and His171 together coordinate Mg(2+).

The protein belongs to the methyltransferase superfamily. HEN1 family. Mg(2+) is required as a cofactor.

The protein localises to the cytoplasm. The catalysed reaction is small RNA 3'-end nucleotide + S-adenosyl-L-methionine = small RNA 3'-end 2'-O-methylnucleotide + S-adenosyl-L-homocysteine + H(+). In terms of biological role, methyltransferase that adds a 2'-O-methyl group at the 3'-end of piRNAs, a class of 24 to 30 nucleotide RNAs that are generated by a Dicer-independent mechanism and are primarily derived from transposons and other repeated sequence elements. This probably protects the 3'-end of piRNAs from uridylation activity and subsequent degradation. Stabilization of piRNAs is essential for gametogenesis. This chain is Small RNA 2'-O-methyltransferase (HENMT1), found in Gallus gallus (Chicken).